We begin with the raw amino-acid sequence, 244 residues long: Probable histone-lysine N-methyltransferase set-23 (244 aa).

Residues 25–86 enclose the Pre-SET domain; that stretch reads EGCNCEAECS…SCRNRVVQCG (62 aa). C27, C29, C33, C39, C41, C65, C69, C71, and C78 together coordinate Zn(2+). The 125-residue stretch at 89 to 213 folds into the SET domain; that stretch reads KKLEIFSTCE…RGEELCYDYG (125 aa). Residues 101 to 103, D141, Y143, R170, and 173 to 174 contribute to the S-adenosyl-L-methionine site; these read KGF and NH. Zn(2+) is bound by residues C176, C225, C227, and C232. The 17-residue stretch at 221–237 folds into the Post-SET domain; it reads NRKLCLCKSEKCRKYLP.

This sequence belongs to the class V-like SAM-binding methyltransferase superfamily. Histone-lysine methyltransferase family. Suvar3-9 subfamily.

The protein resides in the nucleus. Its subcellular location is the chromosome. It catalyses the reaction L-lysyl-[histone] + S-adenosyl-L-methionine = N(6)-methyl-L-lysyl-[histone] + S-adenosyl-L-homocysteine + H(+). Its function is as follows. Probable histone methyltransferase. Required for embryonic development. The protein is Probable histone-lysine N-methyltransferase set-23 (set-23) of Caenorhabditis elegans.